The sequence spans 190 residues: Probable chorismate pyruvate-lyase (190 aa).

Substrate contacts are provided by Arg-74, Leu-112, and Glu-173.

It belongs to the UbiC family.

Its subcellular location is the cytoplasm. It catalyses the reaction chorismate = 4-hydroxybenzoate + pyruvate. Its pathway is cofactor biosynthesis; ubiquinone biosynthesis. In terms of biological role, removes the pyruvyl group from chorismate, with concomitant aromatization of the ring, to provide 4-hydroxybenzoate (4HB) for the ubiquinone pathway. The chain is Probable chorismate pyruvate-lyase from Bordetella bronchiseptica (strain ATCC BAA-588 / NCTC 13252 / RB50) (Alcaligenes bronchisepticus).